The sequence spans 205 residues: High frequency lysogenization protein HflD homolog (205 aa).

This sequence belongs to the HflD family.

It localises to the cytoplasm. It is found in the cell inner membrane. In Aliivibrio fischeri (strain MJ11) (Vibrio fischeri), this protein is High frequency lysogenization protein HflD homolog.